A 214-amino-acid polypeptide reads, in one-letter code: uncharacterized protein (214 aa).

Residues 1-15 (MRPLILSIFALFLAG) form the signal peptide. The N-palmitoyl cysteine moiety is linked to residue C16. The S-diacylglycerol cysteine moiety is linked to residue C16.

To E.coli YjbF.

The protein resides in the cell membrane. This is an uncharacterized protein from Escherichia coli (strain K12).